The chain runs to 98 residues: Large ribosomal subunit protein uL23 (98 aa).

The protein belongs to the universal ribosomal protein uL23 family. In terms of assembly, part of the 50S ribosomal subunit. Contacts protein L29, and trigger factor when it is bound to the ribosome.

In terms of biological role, one of the early assembly proteins it binds 23S rRNA. One of the proteins that surrounds the polypeptide exit tunnel on the outside of the ribosome. Forms the main docking site for trigger factor binding to the ribosome. This chain is Large ribosomal subunit protein uL23, found in Rickettsia felis (strain ATCC VR-1525 / URRWXCal2) (Rickettsia azadi).